The chain runs to 256 residues: Type III pantothenate kinase (256 aa).

7 to 14 (DVGNTRLK) is an ATP binding site. Substrate contacts are provided by residues Tyr96 and 103-106 (GADR). Asp105 functions as the Proton acceptor in the catalytic mechanism. Thr133 contacts ATP. Thr183 is a binding site for substrate.

This sequence belongs to the type III pantothenate kinase family. As to quaternary structure, homodimer. It depends on NH4(+) as a cofactor. Requires K(+) as cofactor.

It localises to the cytoplasm. The enzyme catalyses (R)-pantothenate + ATP = (R)-4'-phosphopantothenate + ADP + H(+). It functions in the pathway cofactor biosynthesis; coenzyme A biosynthesis; CoA from (R)-pantothenate: step 1/5. Catalyzes the phosphorylation of pantothenate (Pan), the first step in CoA biosynthesis. The chain is Type III pantothenate kinase from Verminephrobacter eiseniae (strain EF01-2).